Consider the following 332-residue polypeptide: DPFQCLAVCINLSEAVRSSSPETSVSHIPVHQDGSCNGLQHYAALGRDKLGAAAVNLVAGEKPADVYSGIAARVLDIMKRDAQRDPAEFPDAVRARVLVNQVDRKLVKQTVMTSVYGVTYIGARDQIKRRLKERGAIADDSELFGAACYAAKVTLTALGEMFEAARSIMTWLGECAKIIASENEPVRWTTPLGLPVVQPYRKIGRHLIKTSLQILTLQRETEKVMVKRQRTAFPPNFIHSLDGSHMMMTAVACRRAGLNFAGVHDSYWTHACDVDKLNRILREKFVELYEAPILEKLLESFQTSYPTLLFPPLPERGDFDMRDVLESPYFFN.

Active-site residues include Asp-33, Lys-108, and Asp-265.

The protein belongs to the phage and mitochondrial RNA polymerase family.

It catalyses the reaction RNA(n) + a ribonucleoside 5'-triphosphate = RNA(n+1) + diphosphate. In terms of biological role, DNA-dependent RNA polymerase catalyzes the transcription of DNA into RNA using the four ribonucleoside triphosphates as substrates. This Nicotiana tabacum (Common tobacco) protein is DNA-directed RNA polymerase 2A (RPOT2-SYL).